The following is a 474-amino-acid chain: UDP-N-acetylmuramate--L-alanine ligase (474 aa).

An ATP-binding site is contributed by 116-122 (GTHGKTT).

The protein belongs to the MurCDEF family.

It localises to the cytoplasm. It carries out the reaction UDP-N-acetyl-alpha-D-muramate + L-alanine + ATP = UDP-N-acetyl-alpha-D-muramoyl-L-alanine + ADP + phosphate + H(+). It participates in cell wall biogenesis; peptidoglycan biosynthesis. Cell wall formation. The sequence is that of UDP-N-acetylmuramate--L-alanine ligase from Hyphomonas neptunium (strain ATCC 15444).